The following is a 663-amino-acid chain: Preterminal protein (663 aa).

The Nuclear localization signal signature appears at serine 367 to arginine 376. Residues arginine 374–serine 414 are disordered. A compositionally biased stretch (pro residues) spans proline 380–glutamate 390. Residues glutamate 400–glutamate 409 are compositionally biased toward acidic residues. Position 575 is an O-(5'-phospho-DNA)-serine (serine 575). A disordered region spans residues glutamine 632 to leucine 663.

This sequence belongs to the adenoviridae terminal protein family. Heterodimer with the polymerase; this heterodimer binds to bp 9 to 18 of the genome. Interacts with host POU2F1; POU2F1 binds to the auxiliary sequences in the inverted terminal repeats and tethers the pTP-POL heterodimer to the origin DNA thereby participating in the assembly of the pre-initiation complex (POL-TP-DBP-NFIA-POU2F1). Post-translationally, preterminal protein is used to replicate viral genome, upon genomic encapsidation it is processed first into iTP and finally into TP by adenovirus protease.

It is found in the host nucleus matrix. Its function is as follows. Protein covalently bound to the viral DNA that acts as a primer for viral genomic replication by DNA strand displacement. Assembles on the viral origin of replication in an initiation complex with viral polymerase, DBP, host NFIA and host POU2F1/OCT1. During initiation, the polymerase covalently couples the first dCTP with Ser-580 of pTP. The terminal protein stimulates the template activity over 20 fold compared to protein-free templates. Neo-synthesized viral genomes are linked to two preterminal proteins, one for each 5' end. These new genomes are encapsidated in the nucleus, and during capsid maturation by viral protease, preterminal protein is first cleaved into intermediary (iTP), then into mature TP. May play a role in host nuclear matrix localization of genomic DNA. The sequence is that of Preterminal protein from Bos taurus (Bovine).